Consider the following 273-residue polypeptide: Dermonecrotic toxin LdSicTox-alphaIB1avi (273 aa).

The active site involves histidine 5. Glutamate 25 and aspartate 27 together coordinate Mg(2+). Histidine 41 acts as the Nucleophile in catalysis. Intrachain disulfides connect cysteine 45–cysteine 51 and cysteine 47–cysteine 190. Mg(2+) is bound at residue aspartate 85. A glycan (N-linked (GlcNAc...) asparagine) is linked at asparagine 250.

The protein belongs to the arthropod phospholipase D family. Class II subfamily. It depends on Mg(2+) as a cofactor. Expressed by the venom gland.

It is found in the secreted. The catalysed reaction is an N-(acyl)-sphingosylphosphocholine = an N-(acyl)-sphingosyl-1,3-cyclic phosphate + choline. It carries out the reaction an N-(acyl)-sphingosylphosphoethanolamine = an N-(acyl)-sphingosyl-1,3-cyclic phosphate + ethanolamine. The enzyme catalyses a 1-acyl-sn-glycero-3-phosphocholine = a 1-acyl-sn-glycero-2,3-cyclic phosphate + choline. It catalyses the reaction a 1-acyl-sn-glycero-3-phosphoethanolamine = a 1-acyl-sn-glycero-2,3-cyclic phosphate + ethanolamine. In terms of biological role, dermonecrotic toxins cleave the phosphodiester linkage between the phosphate and headgroup of certain phospholipids (sphingolipid and lysolipid substrates), forming an alcohol (often choline) and a cyclic phosphate. This toxin acts on sphingomyelin (SM). It may also act on ceramide phosphoethanolamine (CPE), lysophosphatidylcholine (LPC) and lysophosphatidylethanolamine (LPE), but not on lysophosphatidylserine (LPS), and lysophosphatidylglycerol (LPG). It acts by transphosphatidylation, releasing exclusively cyclic phosphate products as second products. Induces dermonecrosis, hemolysis, increased vascular permeability, edema, inflammatory response, and platelet aggregation. This chain is Dermonecrotic toxin LdSicTox-alphaIB1avi, found in Loxosceles deserta (Desert recluse spider).